Here is a 595-residue protein sequence, read N- to C-terminus: Alginate biosynthesis sensor protein KinB (595 aa).

The Cytoplasmic portion of the chain corresponds to 1–12; sequence MSMPLPMKLRTR. A helical membrane pass occupies residues 13–33; the sequence is LFLSISALITVSLFGLLLGLF. Over 34–167 the chain is Periplasmic; the sequence is SVMQLGRAQE…SDAETSARHR (134 aa). Residues 168-188 form a helical membrane-spanning segment; that stretch reads AYLVAGLLGLVGVAILLIGFV. The Cytoplasmic portion of the chain corresponds to 189 to 595; it reads TAHSIARRFG…GARFYMLLPV (407 aa). The 53-residue stretch at 195 to 247 folds into the HAMP domain; sequence RRFGAPIETLARAADRIGEGDFDVTLPMTNVAEVGQLTRRFGLMAEALRQYRK. One can recognise a PAS domain in the interval 258 to 323; that stretch reads RRLQAVLDSI…AVEKALLGEV (66 aa). One can recognise a PAC domain in the interval 327 to 369; it reads AMPDLVVDVAGESRLLAWSLYPVTHPGGHSVGAVLVVRDVTEQ. In terms of domain architecture, Histidine kinase spans 382-595; that stretch reads RASHELRTPV…GARFYMLLPV (214 aa). Position 385 is a phosphohistidine; by autocatalysis (His-385).

Autophosphorylated.

It is found in the cell inner membrane. The catalysed reaction is ATP + protein L-histidine = ADP + protein N-phospho-L-histidine.. In terms of biological role, member of the two-component regulatory system AlgB/KinB involved in regulation of alginate biosynthesis genes. KinB functions as a membrane-associated protein kinase that phosphorylates AlgB, probably in response to environmental signals. This Pseudomonas aeruginosa protein is Alginate biosynthesis sensor protein KinB (kinB).